The sequence spans 476 residues: Rab-3A-interacting protein (476 aa).

Phosphoserine; by PKB/AKT1 occurs at positions 163 and 165. Positions 165-260 form a coiled coil; sequence SVLEVREKGY…EVAALKTLVL (96 aa). A disordered region spans residues 262 to 297; sequence SSPTSPTQEPLPGGKTPFKKGHTRNKSTSSAMSGSH. Ser263, Ser266, Ser288, and Ser296 each carry phosphoserine. The span at 287–297 shows a compositional bias: polar residues; that stretch reads KSTSSAMSGSH. Residues 435–444 form an important for RAB11A binding region; sequence TYIRYIQQGL.

The protein belongs to the SEC2 family. As to quaternary structure, homodimer. Interacts with the N-terminal region of SSX2. Interacts with the GDP-bound forms of RAB8A and RAB8B. The interaction with RAB8A is prevented by phosphorylation of RAB8A at 'Thr-72'. Interacts with the GDP-bound forms of RAB3A and RAB3D. Interacts with DCDC1. Interacts (via the N-terminal region) with TRAPPC14; this interaction mediates RAB3IP association with the TRAPP II complex. Forms a heterotetramer with RAB11A where RAB3IP homodimer binds two RAB11A subunits. Forms a complex with RAB11A and RAB11FIP3, probably a heterohexamer with two of each protein subunit, where Rabin8/RAB3IP and RAB11FIP3 simultaneously bind to RAB11A; the complex promotes preciliary trafficking. Forms a complex containing RAB11A, ASAP1, RAB3IP, RAP11FIP3 and ARF4; the complex promotes preciliary trafficking; the complex binds to RHO in photoreceptor cells and promotes RHO ciliary transport. Phosphorylated by AKT1; the phosphorylation alters its GEF activity. In terms of tissue distribution, expressed in brain, kidney, heart, pancreas and placenta. Not detected in skeletal muscle or liver.

The protein localises to the cytoplasm. It localises to the nucleus. Its subcellular location is the cytoskeleton. The protein resides in the cell projection. It is found in the lamellipodium. The protein localises to the vesicle. It localises to the microtubule organizing center. Its subcellular location is the centrosome. Its activity is regulated as follows. Phosphorylation by ATK1 alters its GEF activity. Complex formation with RAB11A and RAB11FIP3 and ciliogenesis function are competitively inhibited by RAB11A-WDR44 interaction. Functionally, guanine nucleotide exchange factor (GEF) which may activate RAB8A and RAB8B. Promotes the exchange of GDP to GTP, converting inactive GDP-bound Rab proteins into their active GTP-bound form. Mediates the release of GDP from RAB8A and RAB8B but not from RAB3A or RAB5. Modulates actin organization and promotes polarized transport of RAB8A-specific vesicles to the cell surface. Together with RAB11A, RAB8A, the exocyst complex, PARD3, PRKCI, ANXA2, CDC42 and DNMBP promotes transcytosis of PODXL to the apical membrane initiation sites (AMIS), apical surface formation and lumenogenesis. Part of the ciliary targeting complex containing Rab11, ASAP1, RAB3IP and RAB11FIP3 and ARF4 that promotes RAB3IP preciliary vesicle trafficking to mother centriole and ciliogenesis initiation. This Homo sapiens (Human) protein is Rab-3A-interacting protein.